The sequence spans 63 residues: LECYRCGVSGCHLRTTCSAKEKFCAKQHNRISTLWWHGCVETCTEDETWKFYRKCCTTNLCNI.

Cystine bridges form between C3–C24, C6–C11, C17–C39, C43–C55, and C56–C61.

This sequence belongs to the three-finger toxin family. Ancestral subfamily. Orphan group XIX sub-subfamily. As to expression, expressed by the venom gland.

Its subcellular location is the secreted. In terms of biological role, may enhance presynaptic acetylcholine release. This Dendroaspis jamesoni kaimosae (Eastern Jameson's mamba) protein is Toxin S6C6.